The following is a 172-amino-acid chain: UPF0254 protein Mlab_1743 (172 aa).

It belongs to the UPF0254 family.

The polypeptide is UPF0254 protein Mlab_1743 (Methanocorpusculum labreanum (strain ATCC 43576 / DSM 4855 / Z)).